The following is a 288-amino-acid chain: Structure-specific endonuclease subunit SLX1 (288 aa).

Residues 7-90 (PFYGVYLLQS…QHPNMTRLIT (84 aa)) enclose the GIY-YIG domain.

It belongs to the SLX1 family. As to quaternary structure, forms a heterodimer with SLX4. It depends on a divalent metal cation as a cofactor.

The protein resides in the nucleus. In terms of biological role, catalytic subunit of the SLX1-SLX4 structure-specific endonuclease that resolves DNA secondary structures generated during DNA repair and recombination. Has endonuclease activity towards branched DNA substrates, introducing single-strand cuts in duplex DNA close to junctions with ss-DNA. This chain is Structure-specific endonuclease subunit SLX1, found in Yarrowia lipolytica (strain CLIB 122 / E 150) (Yeast).